The chain runs to 240 residues: UDP-2,3-diacylglucosamine hydrolase (240 aa).

Residues aspartate 8, histidine 10, aspartate 41, asparagine 78, and histidine 113 each contribute to the Mn(2+) site. Substrate is bound at residue 78-79; it reads NR. Positions 121, 159, 163, 166, and 194 each coordinate substrate. Mn(2+) is bound by residues histidine 194 and histidine 196.

The protein belongs to the LpxH family. It depends on Mn(2+) as a cofactor.

The protein localises to the cell inner membrane. It catalyses the reaction UDP-2-N,3-O-bis[(3R)-3-hydroxytetradecanoyl]-alpha-D-glucosamine + H2O = 2-N,3-O-bis[(3R)-3-hydroxytetradecanoyl]-alpha-D-glucosaminyl 1-phosphate + UMP + 2 H(+). It participates in glycolipid biosynthesis; lipid IV(A) biosynthesis; lipid IV(A) from (3R)-3-hydroxytetradecanoyl-[acyl-carrier-protein] and UDP-N-acetyl-alpha-D-glucosamine: step 4/6. Functionally, hydrolyzes the pyrophosphate bond of UDP-2,3-diacylglucosamine to yield 2,3-diacylglucosamine 1-phosphate (lipid X) and UMP by catalyzing the attack of water at the alpha-P atom. Involved in the biosynthesis of lipid A, a phosphorylated glycolipid that anchors the lipopolysaccharide to the outer membrane of the cell. This chain is UDP-2,3-diacylglucosamine hydrolase, found in Shewanella baltica (strain OS185).